The sequence spans 230 residues: Protein-L-isoaspartate O-methyltransferase (230 aa).

The active site involves S68.

Belongs to the methyltransferase superfamily. L-isoaspartyl/D-aspartyl protein methyltransferase family.

The protein localises to the cytoplasm. It catalyses the reaction [protein]-L-isoaspartate + S-adenosyl-L-methionine = [protein]-L-isoaspartate alpha-methyl ester + S-adenosyl-L-homocysteine. In terms of biological role, catalyzes the methyl esterification of L-isoaspartyl residues in peptides and proteins that result from spontaneous decomposition of normal L-aspartyl and L-asparaginyl residues. It plays a role in the repair and/or degradation of damaged proteins. The chain is Protein-L-isoaspartate O-methyltransferase from Salinibacter ruber (strain DSM 13855 / M31).